Reading from the N-terminus, the 307-residue chain is UDP-3-O-acyl-N-acetylglucosamine deacetylase (307 aa).

Residues H78, H237, and D241 each coordinate Zn(2+). H264 functions as the Proton donor in the catalytic mechanism.

Belongs to the LpxC family. Zn(2+) serves as cofactor.

It catalyses the reaction a UDP-3-O-[(3R)-3-hydroxyacyl]-N-acetyl-alpha-D-glucosamine + H2O = a UDP-3-O-[(3R)-3-hydroxyacyl]-alpha-D-glucosamine + acetate. It participates in glycolipid biosynthesis; lipid IV(A) biosynthesis; lipid IV(A) from (3R)-3-hydroxytetradecanoyl-[acyl-carrier-protein] and UDP-N-acetyl-alpha-D-glucosamine: step 2/6. In terms of biological role, catalyzes the hydrolysis of UDP-3-O-myristoyl-N-acetylglucosamine to form UDP-3-O-myristoylglucosamine and acetate, the committed step in lipid A biosynthesis. The protein is UDP-3-O-acyl-N-acetylglucosamine deacetylase of Azoarcus sp. (strain BH72).